The chain runs to 444 residues: Phosphoglucosamine mutase (444 aa).

S104 acts as the Phosphoserine intermediate in catalysis. Mg(2+)-binding residues include S104, D243, D245, and D247. S104 bears the Phosphoserine mark.

It belongs to the phosphohexose mutase family. Mg(2+) serves as cofactor. In terms of processing, activated by phosphorylation.

The catalysed reaction is alpha-D-glucosamine 1-phosphate = D-glucosamine 6-phosphate. In terms of biological role, catalyzes the conversion of glucosamine-6-phosphate to glucosamine-1-phosphate. In Neisseria gonorrhoeae (strain ATCC 700825 / FA 1090), this protein is Phosphoglucosamine mutase.